A 185-amino-acid polypeptide reads, in one-letter code: Large ribosomal subunit protein uL22 (185 aa).

It belongs to the universal ribosomal protein uL22 family.

In Debaryomyces hansenii (strain ATCC 36239 / CBS 767 / BCRC 21394 / JCM 1990 / NBRC 0083 / IGC 2968) (Yeast), this protein is Large ribosomal subunit protein uL22 (RPL17).